A 46-amino-acid polypeptide reads, in one-letter code: Photosystem II reaction center protein K (46 aa).

Positions 1–9 (MTTLALVLA) are excised as a propeptide. A helical transmembrane segment spans residues 18 to 38 (FAPIVDVLPVIPVFFILLAFV).

Belongs to the PsbK family. PSII is composed of 1 copy each of membrane proteins PsbA, PsbB, PsbC, PsbD, PsbE, PsbF, PsbH, PsbI, PsbJ, PsbK, PsbL, PsbM, PsbT, PsbX, PsbY, PsbZ, Psb30/Ycf12, at least 3 peripheral proteins of the oxygen-evolving complex and a large number of cofactors. It forms dimeric complexes. This protein is tightly associated with CP43 (psbC), one of the core proteins.

It localises to the plastid. Its subcellular location is the chloroplast thylakoid membrane. One of the components of the core complex of photosystem II (PSII). PSII is a light-driven water:plastoquinone oxidoreductase that uses light energy to abstract electrons from H(2)O, generating O(2) and a proton gradient subsequently used for ATP formation. It consists of a core antenna complex that captures photons, and an electron transfer chain that converts photonic excitation into a charge separation. Required for assembly and/or stability of PSII. This Chlamydomonas reinhardtii (Chlamydomonas smithii) protein is Photosystem II reaction center protein K.